The following is a 585-amino-acid chain: ATP-dependent RNA helicase DBP3 (585 aa).

Residues 1–124 (MTTSATEKAL…SSSASAASFT (124 aa)) are disordered. The span at 26–43 (AKAAAAAGASASTSLEGS) shows a compositional bias: low complexity. Composition is skewed to basic residues over residues 52-64 (KDKK…KDKK) and 79-93 (AKKR…KKAA). The segment covering 94–124 (AKSGAATSLESTPAASPAPAASSSASAASFT) has biased composition (low complexity). The Q motif signature appears at 159-187 (FRELDGKVDAAVKKTLDSQGFSTPTPIQA). The Helicase ATP-binding domain maps to 190–377 (WPVLLQNKDV…ESFMNGPVRV (188 aa)). 203–210 (AETGSGKT) provides a ligand contact to ATP. The DEAD box signature appears at 322–325 (DEAD). The Helicase C-terminal domain maps to 406–554 (RLNDFLRSVN…KVPDALTKFP (149 aa)).

Belongs to the DEAD box helicase family. DDX5/DBP2 subfamily.

Its subcellular location is the nucleus. It is found in the nucleolus. It carries out the reaction ATP + H2O = ADP + phosphate + H(+). ATP-dependent RNA helicase required for 60S ribosomal subunit synthesis. Involved in efficient pre-rRNA processing, predominantly at site A3, which is necessary for the normal formation of 25S and 5.8S rRNAs. This is ATP-dependent RNA helicase DBP3 (DBP3) from Mycosarcoma maydis (Corn smut fungus).